A 228-amino-acid chain; its full sequence is 7-cyano-7-deazaguanine synthase (228 aa).

ATP is bound at residue 8–18 (LSGGLDSTTCL). 4 residues coordinate Zn(2+): Cys188, Cys198, Cys201, and Cys204.

Belongs to the QueC family. It depends on Zn(2+) as a cofactor.

It carries out the reaction 7-carboxy-7-deazaguanine + NH4(+) + ATP = 7-cyano-7-deazaguanine + ADP + phosphate + H2O + H(+). The protein operates within purine metabolism; 7-cyano-7-deazaguanine biosynthesis. In terms of biological role, catalyzes the ATP-dependent conversion of 7-carboxy-7-deazaguanine (CDG) to 7-cyano-7-deazaguanine (preQ(0)). The sequence is that of 7-cyano-7-deazaguanine synthase from Legionella pneumophila (strain Corby).